A 346-amino-acid chain; its full sequence is Protein SHI RELATED SEQUENCE 5 (346 aa).

The tract at residues 7–31 is disordered; it reads LGGRDNNSNNNKQDHHQVDKDHHHQ. The segment covering 18 to 31 has biased composition (basic and acidic residues); sequence KQDHHQVDKDHHHQ. Zn(2+) contacts are provided by Cys-125, Cys-128, Cys-136, Cys-141, Cys-145, and Cys-152. Positions 125 to 152 form a DNA-binding region, zn(2)-C6 fungal-type; degenerate; sequence CQDCGNQAKKDCPHMRCRTCCKSRGFHC. A compositionally biased stretch (polar residues) spans 175-186; it reads SLQHHSASSRET. Residues 175–215 are disordered; the sequence is SLQHHSASSRETQNAKRLREASGGDNNDDKDHSGGGGSALA. Residues 187-207 show a composition bias toward basic and acidic residues; sequence QNAKRLREASGGDNNDDKDHS. The Required for homo- and heterodimerization motif lies at 269 to 272; that stretch reads IGGH.

This sequence belongs to the SHI protein family.

It is found in the nucleus. Functionally, transcription activator that binds DNA on 5'-ACTCTAC-3' and promotes auxin homeostasis-regulating gene expression (e.g. YUC genes), as well as genes affecting stamen development, cell expansion and timing of flowering. Synergistically with other SHI-related proteins, regulates gynoecium, stamen and leaf development in a dose-dependent manner, controlling apical-basal patterning. Promotes style and stigma formation, and influences vascular development during gynoecium development. May also have a role in the formation and/or maintenance of the shoot apical meristem (SAM). This is Protein SHI RELATED SEQUENCE 5 (SRS5) from Arabidopsis thaliana (Mouse-ear cress).